A 171-amino-acid polypeptide reads, in one-letter code: MEKLPKKRVSKTKSQKLINSLTTQKNRAFLKKISASEMLLELEKGAFKKNEAYFISDEEDKNYVLVPDNVISLLAENARKAFEARLRAELERDIITQAPIDFEDVREVSLQLLENLRQKDGNLPNINTLNFVKQIKKEHPNLFFNFDNMFKQPPFNENNFENFDNSDEENF.

It belongs to the UPF0763 family.

This Helicobacter pylori (strain Shi470) protein is UPF0763 protein HPSH_03535.